The sequence spans 686 residues: Protein-glutamine gamma-glutamyltransferase 2 (686 aa).

A2 carries the post-translational modification N-acetylalanine. 2 cysteine pairs are disulfide-bonded: C230–C370 and C370–C371. Catalysis depends on residues C277, H335, and D358. Residues N398, D400, E437, E447, and E452 each contribute to the Ca(2+) site. K468 carries the N6-acetyllysine modification. Residue 476 to 483 coordinates GTP; sequence RIRVGDSM. E538 lines the Ca(2+) pocket. 579-582 is a binding site for GTP; the sequence is RDLY. Residue Q632 forms an Isoglutamyl lysine isopeptide (Gln-Lys) (interchain with K-?) linkage.

It belongs to the transglutaminase superfamily. Transglutaminase family. Monomer. Interacts with phospholipase C; promoting alpha-1 adrenergic receptor signaling. Interacts with PLCD1. It depends on Ca(2+) as a cofactor. Post-translationally, disulfide bond formation inactivates the calcium-dependent acyltransferase activity. Cys-370 can form disulfide bonds with both Cys-230 and Cys-371: formation of a disulfide bond between Cys-230 and Cys-370 facilitates formation of the disulfide between Cys-370 and Cys-371, which promotes inactivation of the acyltransferase activity. May also form interchain disulfids between Cys-230 and Cys-370. Ca(2+) protects against disulfide bond formation and inactivation. Auto-transglutaminated: Forms covalent cross-links mediated by transglutaminase between Gln-632 and the epsilon-amino group of a lysine residue of itself or HMGB1, forming homopolymers and heteropolymers, respectively. In terms of processing, S-nitrosylated, leading to inactivation of the acyltransferase activity.

It is found in the cytoplasm. Its subcellular location is the cytosol. The protein localises to the nucleus. The protein resides in the chromosome. It localises to the secreted. It is found in the extracellular space. Its subcellular location is the extracellular matrix. The protein localises to the cell membrane. The protein resides in the mitochondrion. The enzyme catalyses L-glutaminyl-[protein] + L-lysyl-[protein] = [protein]-L-lysyl-N(6)-5-L-glutamyl-[protein] + NH4(+). The catalysed reaction is L-glutaminyl-[protein] + serotonin = 5-serotonyl-L-glutamyl-[protein] + NH4(+). It catalyses the reaction L-glutaminyl-[protein] + dopamine = 5-dopaminyl-L-glutamyl-[protein] + NH4(+). It carries out the reaction L-glutaminyl-[protein] + histamine = 5-histaminyl-L-glutamyl-[protein] + NH4(+). The enzyme catalyses L-glutaminyl-[protein] + (R)-noradrenaline = 5-(R)-noradrenalinyl-L-glutamyl-[protein] + NH4(+). The catalysed reaction is L-glutaminyl-[protein] + H2O = L-glutamyl-[protein] + NH4(+). With respect to regulation, acyltransferase activity is regulated by the binding of GTP and Ca(2+): inactivated by GTP, which stabilizes its closed structure, thereby obstructing the accessibility of substrates to the active sites. In contrast, Ca(2+) acts as a cofactor by inducing conformational change to the active open form. In absence of Ca(2+), Mg(2+) may bind Ca(2+)-binding sites, promoting GTP-binding and subsequent inhibition of the acyltransferase activity. Extracellularly reduced and activated by CLIC3. In terms of biological role, calcium-dependent acyltransferase that catalyzes the formation of covalent bonds between peptide-bound glutamine and various primary amines, such as gamma-amino group of peptide-bound lysine, or mono- and polyamines, thereby producing cross-linked or aminated proteins, respectively. Involved in many biological processes, such as bone development, angiogenesis, wound healing, cellular differentiation, chromatin modification and apoptosis. Acts as a protein-glutamine gamma-glutamyltransferase by mediating the cross-linking of proteins, such as ACO2, HSPB6, FN1, HMGB1, RAP1GDS1, SLC25A4/ANT1, SPP1 and WDR54. Under physiological conditions, the protein cross-linking activity is inhibited by GTP; inhibition is relieved by Ca(2+) in response to various stresses. When secreted, catalyzes cross-linking of proteins of the extracellular matrix, such as FN1 and SPP1 resulting in the formation of scaffolds. Plays a key role during apoptosis, both by (1) promoting the cross-linking of cytoskeletal proteins resulting in condensation of the cytoplasm, and by (2) mediating cross-linking proteins of the extracellular matrix, resulting in the irreversible formation of scaffolds that stabilize the integrity of the dying cells before their clearance by phagocytosis, thereby preventing the leakage of harmful intracellular components. In addition to protein cross-linking, can use different monoamine substrates to catalyze a vast array of protein post-translational modifications: mediates aminylation of serotonin, dopamine, noradrenaline or histamine into glutamine residues of target proteins to generate protein serotonylation, dopaminylation, noradrenalinylation or histaminylation, respectively. Mediates protein serotonylation of small GTPases during activation and aggregation of platelets, leading to constitutive activation of these GTPases. Plays a key role in chromatin organization by mediating serotonylation and dopaminylation of histone H3. Catalyzes serotonylation of 'Gln-5' of histone H3 (H3Q5ser) during serotonergic neuron differentiation, thereby facilitating transcription. Acts as a mediator of neurotransmission-independent role of nuclear dopamine in ventral tegmental area (VTA) neurons: catalyzes dopaminylation of 'Gln-5' of histone H3 (H3Q5dop), thereby regulating relapse-related transcriptional plasticity in the reward system. Regulates vein remodeling by mediating serotonylation and subsequent inactivation of ATP2A2/SERCA2. Also acts as a protein deamidase by mediating the side chain deamidation of specific glutamine residues of proteins to glutamate. Catalyzes specific deamidation of protein gliadin, a component of wheat gluten in the diet. May also act as an isopeptidase cleaving the previously formed cross-links. Also able to participate in signaling pathways independently of its acyltransferase activity: acts as a signal transducer in alpha-1 adrenergic receptor-mediated stimulation of phospholipase C-delta (PLCD) activity and is required for coupling alpha-1 adrenergic agonists to the stimulation of phosphoinositide lipid metabolism. The sequence is that of Protein-glutamine gamma-glutamyltransferase 2 from Mus musculus (Mouse).